The sequence spans 149 residues: Oligosaccharyltransferase complex subunit OSTC (149 aa).

Residues 1 to 32 lie on the Cytoplasmic side of the membrane; sequence METLFRLPFAVLECPNIKLKRPGWVHMPSAMT. Residues 33–53 form a helical membrane-spanning segment; it reads VYALVVVSYFLITGGIIYDVI. Topologically, residues 54 to 83 are extracellular; sequence VEPPSVGSMTDEHGHQRPVAFLAYRVNGQY. The chain crosses the membrane as a helical span at residues 84–104; sequence IMEGLASSFLFTMGGLGFIIL. Topologically, residues 105-117 are cytoplasmic; it reads DRSNAPNIPKLNR. A helical membrane pass occupies residues 118 to 138; sequence FLLLFIGFVSVLLSFFMARVF. The Extracellular portion of the chain corresponds to 139–149; sequence MRMKLPGYLMG.

Belongs to the OSTC family. In terms of assembly, specific component of the STT3A-containing form of the oligosaccharyltransferase (OST) complex.

It localises to the membrane. It participates in protein modification; protein glycosylation. In terms of biological role, specific component of the STT3A-containing form of the oligosaccharyl transferase (OST) complex that catalyzes the initial transfer of a defined glycan (Glc(3)Man(9)GlcNAc(2) in eukaryotes) from the lipid carrier dolichol-pyrophosphate to an asparagine residue within an Asn-X-Ser/Thr consensus motif in nascent polypeptide chains, the first step in protein N-glycosylation. N-glycosylation occurs cotranslationally and the complex associates with the Sec61 complex at the channel-forming translocon complex that mediates protein translocation across the endoplasmic reticulum (ER). All subunits are required for a maximal enzyme activity. This chain is Oligosaccharyltransferase complex subunit OSTC, found in Gallus gallus (Chicken).